A 286-amino-acid polypeptide reads, in one-letter code: ATP synthase gamma chain (286 aa).

The protein belongs to the ATPase gamma chain family. As to quaternary structure, F-type ATPases have 2 components, CF(1) - the catalytic core - and CF(0) - the membrane proton channel. CF(1) has five subunits: alpha(3), beta(3), gamma(1), delta(1), epsilon(1). CF(0) has three main subunits: a, b and c.

The protein localises to the cell inner membrane. In terms of biological role, produces ATP from ADP in the presence of a proton gradient across the membrane. The gamma chain is believed to be important in regulating ATPase activity and the flow of protons through the CF(0) complex. The polypeptide is ATP synthase gamma chain (Teredinibacter turnerae (strain ATCC 39867 / T7901)).